The primary structure comprises 185 residues: Thymidine kinase (185 aa).

ATP-binding positions include 7–14 (GPMFAGKT) and 83–86 (DEIQ). The active-site Proton acceptor is E84. C139, C142, C177, and H180 together coordinate Zn(2+).

This sequence belongs to the thymidine kinase family. As to quaternary structure, homotetramer.

It is found in the cytoplasm. The enzyme catalyses thymidine + ATP = dTMP + ADP + H(+). In Pyrobaculum aerophilum (strain ATCC 51768 / DSM 7523 / JCM 9630 / CIP 104966 / NBRC 100827 / IM2), this protein is Thymidine kinase.